The following is a 150-amino-acid chain: Catabolic 3-dehydroquinase 1 (150 aa).

Tyrosine 24 functions as the Proton acceptor in the catalytic mechanism. 3 residues coordinate substrate: asparagine 75, histidine 81, and aspartate 88. Histidine 101 (proton donor) is an active-site residue. Residues valine 102–serine 103 and arginine 112 contribute to the substrate site.

Belongs to the type-II 3-dehydroquinase family. In terms of assembly, homododecamer. Adopts a ring-like structure, composed of an arrangement of two hexameric rings stacked on top of one another.

The enzyme catalyses 3-dehydroquinate = 3-dehydroshikimate + H2O. The protein operates within aromatic compound metabolism; 3,4-dihydroxybenzoate biosynthesis; 3,4-dihydroxybenzoate from 3-dehydroquinate: step 1/2. In terms of biological role, is involved in the catabolism of quinate. Allows the utilization of quinate as carbon source via the beta-ketoadipate pathway. In Neosartorya fischeri (strain ATCC 1020 / DSM 3700 / CBS 544.65 / FGSC A1164 / JCM 1740 / NRRL 181 / WB 181) (Aspergillus fischerianus), this protein is Catabolic 3-dehydroquinase 1.